The primary structure comprises 699 residues: Polyribonucleotide nucleotidyltransferase (699 aa).

Residues Asp-487 and Asp-493 each contribute to the Mg(2+) site. One can recognise a KH domain in the interval 554–613 (PRMLNMKINPEKIRDVIGKGGAVIRALQEETGTVIEIEDDGSITISSVSAEGAQKAKARI). An S1 motif domain is found at 623 to 691 (GKVYEGTVVR…ERGKIRLSMK (69 aa)).

The protein belongs to the polyribonucleotide nucleotidyltransferase family. Requires Mg(2+) as cofactor.

It localises to the cytoplasm. It carries out the reaction RNA(n+1) + phosphate = RNA(n) + a ribonucleoside 5'-diphosphate. Functionally, involved in mRNA degradation. Catalyzes the phosphorolysis of single-stranded polyribonucleotides processively in the 3'- to 5'-direction. This Azoarcus sp. (strain BH72) protein is Polyribonucleotide nucleotidyltransferase.